Reading from the N-terminus, the 78-residue chain is Probable [Fe-S]-dependent transcriptional repressor (78 aa).

Positions 56, 61, 64, and 70 each coordinate iron-sulfur cluster.

It belongs to the FeoC family.

In terms of biological role, may function as a transcriptional regulator that controls feoABC expression. In Escherichia coli O7:K1 (strain IAI39 / ExPEC), this protein is Probable [Fe-S]-dependent transcriptional repressor.